The following is a 160-amino-acid chain: Sperm protein associated with the nucleus on the X chromosome N2 (160 aa).

2 disordered regions span residues 1-48 (MEKP…TSEY) and 64-160 (SNQL…GEED). Basic and acidic residues predominate over residues 10–35 (GEKRKSPCDSNNRNDEMQETPNRDLA). The segment covering 64 to 79 (SNQLENDQSQENSVNP) has biased composition (polar residues). Residues 81–97 (QEEEDEGSSQEDEDLDS) show a composition bias toward acidic residues. The span at 136-148 (SSERSSQEEKDPD) shows a compositional bias: basic and acidic residues.

This sequence belongs to the SPAN-X family.

The chain is Sperm protein associated with the nucleus on the X chromosome N2 (SPANXN2) from Pongo pygmaeus (Bornean orangutan).